Here is a 446-residue protein sequence, read N- to C-terminus: tRNA-2-methylthio-N(6)-dimethylallyladenosine synthase (446 aa).

Residues 5-121 (KYLYVETFGC…LPEIVRAAER (117 aa)) enclose the MTTase N-terminal domain. The [4Fe-4S] cluster site is built by Cys-14, Cys-50, Cys-84, Cys-159, Cys-163, and Cys-166. The region spanning 145-375 (GEGGVTRFVT…QTLQQQMKRE (231 aa)) is the Radical SAM core domain. A TRAM domain is found at 378–440 (ISFVGTRQLV…QNSLLGEIVT (63 aa)).

The protein belongs to the methylthiotransferase family. MiaB subfamily. Monomer. [4Fe-4S] cluster is required as a cofactor.

The protein resides in the cytoplasm. The enzyme catalyses N(6)-dimethylallyladenosine(37) in tRNA + (sulfur carrier)-SH + AH2 + 2 S-adenosyl-L-methionine = 2-methylsulfanyl-N(6)-dimethylallyladenosine(37) in tRNA + (sulfur carrier)-H + 5'-deoxyadenosine + L-methionine + A + S-adenosyl-L-homocysteine + 2 H(+). Its function is as follows. Catalyzes the methylthiolation of N6-(dimethylallyl)adenosine (i(6)A), leading to the formation of 2-methylthio-N6-(dimethylallyl)adenosine (ms(2)i(6)A) at position 37 in tRNAs that read codons beginning with uridine. The protein is tRNA-2-methylthio-N(6)-dimethylallyladenosine synthase of Geobacter sulfurreducens (strain ATCC 51573 / DSM 12127 / PCA).